Here is a 186-residue protein sequence, read N- to C-terminus: NADH dehydrogenase [ubiquinone] 1 beta subcomplex subunit 8, mitochondrial (186 aa).

A mitochondrion-targeting transit peptide spans Met-1 to Thr-28. Residues Leu-133 to Tyr-153 form a helical membrane-spanning segment.

This sequence belongs to the complex I NDUFB8 subunit family. Complex I is composed of 45 different subunits.

The protein resides in the mitochondrion inner membrane. In terms of biological role, accessory subunit of the mitochondrial membrane respiratory chain NADH dehydrogenase (Complex I), that is believed not to be involved in catalysis. Complex I functions in the transfer of electrons from NADH to the respiratory chain. The immediate electron acceptor for the enzyme is believed to be ubiquinone. The chain is NADH dehydrogenase [ubiquinone] 1 beta subcomplex subunit 8, mitochondrial (NDUFB8) from Homo sapiens (Human).